The following is a 262-amino-acid chain: Small ribosomal subunit protein uS2 (262 aa).

Residues 224–246 are disordered; it reads GNQGEDQDDAQEQQVAADKKADS.

Belongs to the universal ribosomal protein uS2 family.

This is Small ribosomal subunit protein uS2 from Lacticaseibacillus casei (strain BL23) (Lactobacillus casei).